We begin with the raw amino-acid sequence, 100 residues long: Urease subunit gamma (100 aa).

This sequence belongs to the urease gamma subunit family. Heterotrimer of UreA (gamma), UreB (beta) and UreC (alpha) subunits. Three heterotrimers associate to form the active enzyme.

The protein resides in the cytoplasm. The enzyme catalyses urea + 2 H2O + H(+) = hydrogencarbonate + 2 NH4(+). Its pathway is nitrogen metabolism; urea degradation; CO(2) and NH(3) from urea (urease route): step 1/1. This is Urease subunit gamma from Hahella chejuensis (strain KCTC 2396).